The primary structure comprises 428 residues: Glucose-1-phosphate adenylyltransferase (428 aa).

Alpha-D-glucose 1-phosphate contacts are provided by residues Y99, G164, 179–180 (EK), and S190.

This sequence belongs to the bacterial/plant glucose-1-phosphate adenylyltransferase family. In terms of assembly, homotetramer.

The enzyme catalyses alpha-D-glucose 1-phosphate + ATP + H(+) = ADP-alpha-D-glucose + diphosphate. It functions in the pathway glycan biosynthesis; glycogen biosynthesis. Functionally, involved in the biosynthesis of ADP-glucose, a building block required for the elongation reactions to produce glycogen. Catalyzes the reaction between ATP and alpha-D-glucose 1-phosphate (G1P) to produce pyrophosphate and ADP-Glc. This is Glucose-1-phosphate adenylyltransferase from Thermomicrobium roseum (strain ATCC 27502 / DSM 5159 / P-2).